We begin with the raw amino-acid sequence, 156 residues long: Insulin (156 aa).

The N-terminal stretch at 1–31 is a signal peptide; it reads MSKFLLQSHSANACLLTLLLTLASNLDISLA. Intrachain disulfides connect Cys37–Cys114, Cys49–Cys119, Cys61–Cys128, and Cys112–Cys115. A propeptide spans 79–93 (c peptide beta); sequence DTENVNDKLRGILLN. Residues 96 to 102 constitute a propeptide, c peptide alpha; that stretch reads EAFSYLT. A propeptide spans 141 to 156 (d peptide); sequence TGRSNSGHAQLEDNFS. Residues 144-156 constitute a propeptide, d peptide short form; that stretch reads SNSGHAQLEDNFS. Glu152 is modified (4-carboxyglutamate).

Belongs to the insulin family. As to quaternary structure, heterodimer of a B chain or a B chain' and an A chain probably linked by three disulfide bonds. As to expression, expressed in the central region of the cerebral ganglia mostly within the F and C clusters.

The protein resides in the secreted. Its function is as follows. Involved in glucose metabolism. This is Insulin (PIN) from Aplysia californica (California sea hare).